We begin with the raw amino-acid sequence, 123 residues long: DNA-directed RNA polymerase subunit omega (123 aa).

Positions 67 to 123 are disordered; the sequence is EESAADSLSLGGFSTADVEAEVGGGPVQPDPGASQERAFDEAADGTAQGSGDPDPTT.

The protein belongs to the RNA polymerase subunit omega family. The RNAP catalytic core consists of 2 alpha, 1 beta, 1 beta' and 1 omega subunit. When a sigma factor is associated with the core the holoenzyme is formed, which can initiate transcription.

It catalyses the reaction RNA(n) + a ribonucleoside 5'-triphosphate = RNA(n+1) + diphosphate. Promotes RNA polymerase assembly. Latches the N- and C-terminal regions of the beta' subunit thereby facilitating its interaction with the beta and alpha subunits. This is DNA-directed RNA polymerase subunit omega from Halorhodospira halophila (strain DSM 244 / SL1) (Ectothiorhodospira halophila (strain DSM 244 / SL1)).